The primary structure comprises 635 residues: 4-hydroxy-3-methylbut-2-enyl diphosphate reductase (635 aa).

The 4-hydroxy-3-methylbut-2-enyl diphosphate reductase stretch occupies residues 1–279 (MSIILAKKSG…KEAIFKMSNK (279 aa)). Cys-12 is a binding site for [4Fe-4S] cluster. His-42 and His-77 together coordinate (2E)-4-hydroxy-3-methylbut-2-enyl diphosphate. Positions 42 and 77 each coordinate dimethylallyl diphosphate. Isopentenyl diphosphate-binding residues include His-42 and His-77. Cys-99 contributes to the [4Fe-4S] cluster binding site. His-127 is a (2E)-4-hydroxy-3-methylbut-2-enyl diphosphate binding site. Residue His-127 participates in dimethylallyl diphosphate binding. His-127 contributes to the isopentenyl diphosphate binding site. The Proton donor role is filled by Glu-129. Thr-163 contacts (2E)-4-hydroxy-3-methylbut-2-enyl diphosphate. A [4Fe-4S] cluster-binding site is contributed by Cys-191. The (2E)-4-hydroxy-3-methylbut-2-enyl diphosphate site is built by Ser-219, Ser-220, Asn-221, and Ser-263. Ser-219, Ser-220, Asn-221, and Ser-263 together coordinate dimethylallyl diphosphate. Residues Ser-219, Ser-220, Asn-221, and Ser-263 each contribute to the isopentenyl diphosphate site. 4 S1 motif domains span residues 298–373 (GQEV…LNRE), 380–455 (KEAF…ASRR), 476–544 (DTIK…LSIK), and 561–630 (GNIV…LSIK).

This sequence in the N-terminal section; belongs to the IspH family. [4Fe-4S] cluster serves as cofactor.

It carries out the reaction isopentenyl diphosphate + 2 oxidized [2Fe-2S]-[ferredoxin] + H2O = (2E)-4-hydroxy-3-methylbut-2-enyl diphosphate + 2 reduced [2Fe-2S]-[ferredoxin] + 2 H(+). It catalyses the reaction dimethylallyl diphosphate + 2 oxidized [2Fe-2S]-[ferredoxin] + H2O = (2E)-4-hydroxy-3-methylbut-2-enyl diphosphate + 2 reduced [2Fe-2S]-[ferredoxin] + 2 H(+). It participates in isoprenoid biosynthesis; dimethylallyl diphosphate biosynthesis; dimethylallyl diphosphate from (2E)-4-hydroxy-3-methylbutenyl diphosphate: step 1/1. The protein operates within isoprenoid biosynthesis; isopentenyl diphosphate biosynthesis via DXP pathway; isopentenyl diphosphate from 1-deoxy-D-xylulose 5-phosphate: step 6/6. Functionally, catalyzes the conversion of 1-hydroxy-2-methyl-2-(E)-butenyl 4-diphosphate (HMBPP) into a mixture of isopentenyl diphosphate (IPP) and dimethylallyl diphosphate (DMAPP). Acts in the terminal step of the DOXP/MEP pathway for isoprenoid precursor biosynthesis. In Clostridium tetani (strain Massachusetts / E88), this protein is 4-hydroxy-3-methylbut-2-enyl diphosphate reductase.